The following is a 446-amino-acid chain: N-succinylarginine dihydrolase (446 aa).

Substrate contacts are provided by residues 19 to 28, N110, and 137 to 138; these read AGLSFGNVAS and HR. The active site involves E174. R213 lines the substrate pocket. Residue H249 is part of the active site. 2 residues coordinate substrate: D251 and N364. The active-site Nucleophile is the C370.

This sequence belongs to the succinylarginine dihydrolase family. As to quaternary structure, homodimer.

The enzyme catalyses N(2)-succinyl-L-arginine + 2 H2O + 2 H(+) = N(2)-succinyl-L-ornithine + 2 NH4(+) + CO2. The protein operates within amino-acid degradation; L-arginine degradation via AST pathway; L-glutamate and succinate from L-arginine: step 2/5. Functionally, catalyzes the hydrolysis of N(2)-succinylarginine into N(2)-succinylornithine, ammonia and CO(2). The chain is N-succinylarginine dihydrolase from Burkholderia orbicola (strain MC0-3).